Here is a 473-residue protein sequence, read N- to C-terminus: Glycogen synthase (473 aa).

Lys-15 is a binding site for ADP-alpha-D-glucose.

It belongs to the glycosyltransferase 1 family. Bacterial/plant glycogen synthase subfamily.

It catalyses the reaction [(1-&gt;4)-alpha-D-glucosyl](n) + ADP-alpha-D-glucose = [(1-&gt;4)-alpha-D-glucosyl](n+1) + ADP + H(+). It participates in glycan biosynthesis; glycogen biosynthesis. In terms of biological role, synthesizes alpha-1,4-glucan chains using ADP-glucose. The sequence is that of Glycogen synthase from Flavobacterium johnsoniae (strain ATCC 17061 / DSM 2064 / JCM 8514 / BCRC 14874 / CCUG 350202 / NBRC 14942 / NCIMB 11054 / UW101) (Cytophaga johnsonae).